The following is a 1245-amino-acid chain: Structural polyprotein (1245 aa).

The segment at 1–106 is disordered; that stretch reads MNRGFFNMLG…KTKPGKRQRM (106 aa). Positions 37-70 are host transcription inhibition; it reads GLASQIQQLTTAVSALVIGQATRPQNPRPRPPPR. Over residues 38–49 the composition is skewed to polar residues; sequence LASQIQQLTTAV. The short motif at 63–100 is the Nuclear localization signal element; sequence PRPRPPPRQKKQAPKQPPKPKKPKPQEKKKKQPAKTKP. Basic residues predominate over residues 67–106; it reads PPPRQKKQAPKQPPKPKKPKPQEKKKKQPAKTKPGKRQRM. The binding to the viral RNA stretch occupies residues 86–115; sequence KPQEKKKKQPAKTKPGKRQRMALKLEADRL. Residues 100–114 form a ribosome-binding region; sequence PGKRQRMALKLEADR. One can recognise a Peptidase S3 domain in the interval 114–264; it reads RLFDVKNEDG…KTTPEGTEEW (151 aa). H141 functions as the Charge relay system in the catalytic mechanism. The Nuclear export signal motif lies at 146–156; sequence IDHPVLSKLKF. The tract at residues 157–162 is interaction with spike glycoprotein E2; it reads TKSSAY. D163 (charge relay system) is an active-site residue. The tract at residues 185–195 is dimerization of the capsid protein; it reads PEGFYNWHHGA. The Charge relay system role is filled by S215. The dimerization of the capsid protein stretch occupies residues 221–225; it reads DNSGR. The interaction with spike glycoprotein E2 stretch occupies residues 249-253; the sequence is SKGKT. The interval 265 to 279 is functions as an uncleaved signal peptide for the precursor of protein E3/E2; sequence SAAPLVTAMCLLGNV. A glycan (N-linked (GlcNAc...) asparagine; by host) is linked at N278. 4 cysteine pairs are disulfide-bonded: C283-C289, C480-C594, C529-C554, and C531-C548. Residues 329-690 lie on the Extracellular side of the membrane; it reads SVTDDFTLTS…HEIVQHYYHR (362 aa). The N-linked (GlcNAc...) asparagine; by host glycan is linked to N524. The N-linked (GlcNAc...) asparagine; by host glycan is linked to N646. Residues 691–718 form a helical membrane-spanning segment; that stretch reads HPVYTILAVASAAVAMMIGVTVAALCAC. The tract at residues 719–723 is interaction with the capsid protein; that stretch reads KARRE. The Cytoplasmic segment spans residues 719-751; sequence KARRECLTPYALAPNAVIPTSLALLCCVRSANA. S-palmitoyl cysteine; by host attachment occurs at residues C724, C744, and C745. Residues C724 and C745 are joined by a disulfide bond. Residues 752–763 lie on the Extracellular side of the membrane; the sequence is ETFTETMSYFWS. The helical transmembrane segment at 764–784 threads the bilayer; that stretch reads NSQPFFWVQLCIPLAAVIVLM. R785 is a topological domain (cytoplasmic). The chain crosses the membrane as a helical span at residues 786 to 806; it reads CCSCCLPFLVVAGAYLAKVDA. The Extracellular portion of the chain corresponds to 807 to 1214; that stretch reads YEHATTVPNV…QAAISKTSWS (408 aa). 4 disulfide bridges follow: C855/C920, C868/C900, C869/C902, and C874/C884. The segment at 890–907 is E1 fusion peptide loop; that stretch reads VYPFMWGGAQCFCDSENS. N-linked (GlcNAc...) asparagine; by host glycans are attached at residues N945 and N1051. 4 disulfides stabilise this stretch: C1065-C1077, C1107-C1182, C1112-C1186, and C1134-C1176. Residues 1215 to 1239 form a helical membrane-spanning segment; that stretch reads WLFALFGGASSLLIIGLTIFACSMM. The Cytoplasmic portion of the chain corresponds to 1240–1245; that stretch reads LTSTRR.

Homodimer. Homomultimer. Interacts with host karyopherin KPNA4; this interaction allows the nuclear import of the viral capsid protein. Interacts with spike glycoprotein E2. Interacts with host IRAK1; the interaction leads to inhibition of IRAK1-dependent signaling. In terms of assembly, the precursor of protein E3/E2 and E1 form a heterodimer shortly after synthesis. As to quaternary structure, the precursor of protein E3/E2 and E1 form a heterodimer shortly after synthesis. Processing of the precursor of protein E3/E2 into E2 and E3 results in a heterodimer of the spike glycoproteins E2 and E1. Spike at virion surface are constituted of a trimer of E2-E1 heterodimers. After target cell attachment and endocytosis, E1 change conformation to form homotrimers. E2-E1 heterodimers interact with host VLDLR or LRP8/APOER2 to mediate viral entry. Interacts with 6K protein. Processing of the precursor of protein E3/E2 into E2 and E3 results in a heterodimer of the spike glycoproteins E2 and E1. Spike at virion surface are constituted of a trimer of E2-E1 heterodimers. E2-E1 heterodimers interact with host VLDLR or LRP8/APOER2 to mediate viral entry. Interacts with 6K protein. Interacts with the capsid protein. In terms of assembly, oligomer. Interacts with spike glycoprotein E1. Interacts with spike glycoprotein E2. Post-translationally, structural polyprotein: Specific enzymatic cleavages in vivo yield mature proteins. Capsid protein is auto-cleaved during polyprotein translation, unmasking a signal peptide at the N-terminus of the precursor of E3/E2. The remaining polyprotein is then targeted to the host endoplasmic reticulum, where host signal peptidase cleaves it into pE2, 6K and E1 proteins. pE2 is further processed to mature E3 and E2 by host furin in trans-Golgi vesicle. In terms of processing, palmitoylated via thioester bonds. These palmitoylations may induce disruption of the C-terminus transmembrane. This would result in the reorientation of E2 C-terminus from lumenal to cytoplasmic side. N-glycosylated. Post-translationally, palmitoylated via thioester bonds.

It is found in the virion. It localises to the host cytoplasm. The protein resides in the host cell membrane. Its subcellular location is the host nucleus. The protein localises to the virion membrane. It is found in the host Golgi apparatus. It localises to the host trans-Golgi network. The protein resides in the host endoplasmic reticulum. The enzyme catalyses Autocatalytic release of the core protein from the N-terminus of the togavirus structural polyprotein by hydrolysis of a -Trp-|-Ser- bond.. Its function is as follows. Forms an icosahedral capsid with a T=4 symmetry composed of 240 copies of the capsid protein surrounded by a lipid membrane through which penetrate 80 spikes composed of trimers of E1-E2 heterodimers. The capsid protein binds to the viral RNA genome at a site adjacent to a ribosome binding site for viral genome translation following genome release. Possesses a protease activity that results in its autocatalytic cleavage from the nascent structural protein. Following its self-cleavage, the capsid protein transiently associates with ribosomes, and within several minutes the protein binds to viral RNA and rapidly assembles into icosahedric core particles. The resulting nucleocapsid eventually associates with the cytoplasmic domain of the spike glycoprotein E2 at the cell membrane, leading to budding and formation of mature virions. In case of infection, new virions attach to target cells and after clathrin-mediated endocytosis their membrane fuses with the host endosomal membrane. This leads to the release of the nucleocapsid into the cytoplasm, followed by an uncoating event necessary for the genomic RNA to become accessible. The uncoating might be triggered by the interaction of capsid proteins with ribosomes. Binding of ribosomes would release the genomic RNA since the same region is genomic RNA-binding and ribosome-binding. Specifically inhibits interleukin-1 receptor-associated kinase 1/IRAK1-dependent signaling during viral entry, representing a means by which the alphaviruses may evade innate immune detection and activation prior to viral gene expression. Provides the signal sequence for the translocation of the precursor of protein E3/E2 to the host endoplasmic reticulum. Furin-cleaved E3 remains associated with spike glycoprotein E1 and mediates pH protection of the latter during the transport via the secretory pathway. After virion release from the host cell, the assembly protein E3 is gradually released in the extracellular space. In terms of biological role, plays a role in viral attachment to target host cell, by binding to the cell receptors VLDLR or LRP8/APOER2. Synthesized as a pE2 precursor which is processed by furin at the cell membrane just before virion budding, giving rise to E2-E1 heterodimer. The pE2-E1 heterodimer is stable, whereas E2-E1 is unstable and dissociate at low pH. pE2 is processed at the last step, presumably to avoid E1 fusion activation before its final export to cell surface. E2 C-terminus contains a transitory transmembrane that would be disrupted by palmitoylation, resulting in reorientation of the C-terminal tail from lumenal to cytoplasmic side. This step is critical since E2 C-terminus is involved in budding by interacting with capsid proteins. This release of E2 C-terminus in cytoplasm occurs lately in protein export, and precludes premature assembly of particles at the endoplasmic reticulum membrane. Functionally, acts as a viroporin that participates in virus glycoprotein processing and transport to the plasma membrane, cell permeabilization and budding of viral particles. Disrupts the calcium homeostasis of the cell, probably at the endoplasmic reticulum level resulting in the increased levels of cytoplasmic calcium. Because of its lipophilic properties, the 6K protein is postulated to influence the selection of lipids that interact with the transmembrane domains of the glycoproteins, which, in turn, affects the deformability of the bilayer required for the extreme curvature that occurs as budding proceeds. Present in low amount in virions, about 3% compared to viral glycoproteins. Its function is as follows. Class II viral fusion protein. Fusion activity is inactive as long as E1 is bound to E2 in mature virion. After virus attachment to target cell via host VLDLR or LRP8/APOER2 and endocytosis, acidification of the endosome induces dissociation of E1/E2 heterodimer and concomitant trimerization of the E1 subunits. This E1 trimer is fusion active, and promotes release of viral nucleocapsid in cytoplasm after endosome and viral membrane fusion. Efficient fusion requires the presence of cholesterol and sphingolipid in the target membrane. The chain is Structural polyprotein from Acrocephalus scirpaceus (Eurasian reed-warbler).